A 362-amino-acid polypeptide reads, in one-letter code: MGTLATRAACHGAHLALALLLLLSLSGPWLSAVVPGTPPLFNVSLDAAPEQRWLPMLRHYDPDFLRTAVAQVIGDRVPQWVLGMVGEIVSKVESFLPQPFTDEIRSICDSLNLSLADGILVNLAYEASAFCTSIVAQDSQGHIYHGRNLDYPFGKILRKLTANVQFIKNGQIAFTGTTFVGYVGLWTGQSPHKFTISGDERDKGWWWENMIAALSLGHSPISWLIRKTLSESESFEAAVYTLAKTPLIADVYYIVGGTSPKEGVVITRDRGGPADIWPLDPLNGEWFRVETNYDHWKPAPKVDDRRTPAIKALNATGQAHLNLETLFQVLSLFPVYNNYTIYTTVMSAAEPDKYLTMIRNPS.

Residues 1–33 (MGTLATRAACHGAHLALALLLLLSLSGPWLSAV) form the signal peptide. Residues N42 and N112 are each glycosylated (N-linked (GlcNAc...) asparagine). C131 (nucleophile) is an active-site residue. N314 and N338 each carry an N-linked (GlcNAc...) asparagine glycan.

Belongs to the acid ceramidase family. In terms of assembly, heterodimer of an alpha and a beta subunit, produced by autocatalytic cleavage. Post-translationally, N-glycosylated. Tunicamycin treatment causes a reduction in specific activity against N-palmitoylethanolamine. Autoproteolytic cleavage at pH 4.5 gives rise to the alpha and beta subunit. Cleavage gives rise to a conformation change that activates the enzyme. The same catalytic Cys residue mediates the autoproteolytic cleavage and subsequent hydrolysis of lipid substrates.

The protein localises to the lysosome. Its subcellular location is the membrane. The catalysed reaction is N-hexadecanoylethanolamine + H2O = ethanolamine + hexadecanoate. It catalyses the reaction an N-(long-chain fatty acyl)ethanolamine + H2O = a long-chain fatty acid + ethanolamine. The enzyme catalyses N-dodecanoylethanolamine + H2O = dodecanoate + ethanolamine. It carries out the reaction N-tetradecanoylethanolamine + H2O = tetradecanoate + ethanolamine. The catalysed reaction is an N-acylsphing-4-enine + H2O = sphing-4-enine + a fatty acid. It catalyses the reaction N-hexadecanoylsphing-4-enine + H2O = sphing-4-enine + hexadecanoate. The enzyme catalyses N-dodecanoylsphing-4-enine + H2O = dodecanoate + sphing-4-enine. The protein operates within lipid metabolism; fatty acid metabolism. In terms of biological role, degrades bioactive fatty acid amides to their corresponding acids, with the following preference: N-palmitoylethanolamine &gt; N-myristoylethanolamine &gt; N-stearoylethanolamine &gt; N-oleoylethanolamine &gt; N-linoleoylethanolamine &gt; N-arachidonoylethanolamine. In Mus musculus (Mouse), this protein is N-acylethanolamine-hydrolyzing acid amidase.